A 299-amino-acid chain; its full sequence is Regucalcin (299 aa).

Glutamate 18 lines the a divalent metal cation pocket. 3 residues coordinate substrate: arginine 101, asparagine 103, and glutamate 121. 2 residues coordinate a divalent metal cation: asparagine 154 and aspartate 204. The active-site Proton donor/acceptor is aspartate 204.

This sequence belongs to the SMP-30/CGR1 family. Zn(2+) serves as cofactor. Requires Mn(2+) as cofactor. The cofactor is Ca(2+). It depends on Mg(2+) as a cofactor.

It localises to the cytoplasm. It carries out the reaction D-glucono-1,5-lactone + H2O = D-gluconate + H(+). The protein operates within cofactor biosynthesis; L-ascorbate biosynthesis via UDP-alpha-D-glucuronate pathway; L-ascorbate from UDP-alpha-D-glucuronate: step 3/4. Its function is as follows. Gluconolactonase with low activity towards other sugar lactones, including gulonolactone and galactonolactone. Catalyzes a key step in ascorbic acid (vitamin C) biosynthesis. Can also hydrolyze diisopropyl phosphorofluoridate and phenylacetate (in vitro). Calcium-binding protein. Modulates Ca(2+) signaling, and Ca(2+)-dependent cellular processes and enzyme activities. The protein is Regucalcin of Gallus gallus (Chicken).